The primary structure comprises 192 residues: uncharacterized protein (192 aa).

In terms of domain architecture, Nudix hydrolase spans 29–160 (HRQAAVLIPI…PLDIYRRGDS (132 aa)). Positions 67–89 (GAVDDTDTSVIAAALREAEEEVA) match the Nudix box motif. Mg(2+) contacts are provided by Glu-83 and Glu-87.

The protein belongs to the Nudix hydrolase family. PCD1 subfamily. Mn(2+) serves as cofactor. The cofactor is Mg(2+).

Functionally, probably mediates the hydrolysis of some nucleoside diphosphate derivatives. This is an uncharacterized protein from Escherichia coli O7:K1 (strain IAI39 / ExPEC).